The primary structure comprises 433 residues: Histidine--tRNA ligase (433 aa).

It belongs to the class-II aminoacyl-tRNA synthetase family. Homodimer.

It localises to the cytoplasm. The catalysed reaction is tRNA(His) + L-histidine + ATP = L-histidyl-tRNA(His) + AMP + diphosphate + H(+). The polypeptide is Histidine--tRNA ligase (Crocosphaera subtropica (strain ATCC 51142 / BH68) (Cyanothece sp. (strain ATCC 51142))).